We begin with the raw amino-acid sequence, 163 residues long: MALNLQDKQAIVAEVNEAAKGALSAVIADSRGVTVEKMTELRKSAREAGVTMRVVRNTLLRRAVEGTDYECLKDTFVGPTLIAFSNEHPGARARLFKEFAKANDKFEIKGAAFEGKIQDVEFLATLPTYEEAIARLMGTMKEAAAGKLARTFAALRDKLQEAA.

The protein belongs to the universal ribosomal protein uL10 family. Part of the ribosomal stalk of the 50S ribosomal subunit. The N-terminus interacts with L11 and the large rRNA to form the base of the stalk. The C-terminus forms an elongated spine to which L12 dimers bind in a sequential fashion forming a multimeric L10(L12)X complex.

Forms part of the ribosomal stalk, playing a central role in the interaction of the ribosome with GTP-bound translation factors. The chain is Large ribosomal subunit protein uL10 (rplJ) from Haemophilus influenzae (strain ATCC 51907 / DSM 11121 / KW20 / Rd).